A 292-amino-acid chain; its full sequence is Ribosomal RNA small subunit methyltransferase A (292 aa).

Asparagine 28, leucine 30, glycine 55, glutamate 76, aspartate 101, and asparagine 126 together coordinate S-adenosyl-L-methionine.

It belongs to the class I-like SAM-binding methyltransferase superfamily. rRNA adenine N(6)-methyltransferase family. RsmA subfamily.

It localises to the cytoplasm. The enzyme catalyses adenosine(1518)/adenosine(1519) in 16S rRNA + 4 S-adenosyl-L-methionine = N(6)-dimethyladenosine(1518)/N(6)-dimethyladenosine(1519) in 16S rRNA + 4 S-adenosyl-L-homocysteine + 4 H(+). Functionally, specifically dimethylates two adjacent adenosines (A1518 and A1519) in the loop of a conserved hairpin near the 3'-end of 16S rRNA in the 30S particle. May play a critical role in biogenesis of 30S subunits. The sequence is that of Ribosomal RNA small subunit methyltransferase A from Bacillus cereus (strain G9842).